A 119-amino-acid polypeptide reads, in one-letter code: Large ribosomal subunit protein bL20 (119 aa).

The protein belongs to the bacterial ribosomal protein bL20 family.

Functionally, binds directly to 23S ribosomal RNA and is necessary for the in vitro assembly process of the 50S ribosomal subunit. It is not involved in the protein synthesizing functions of that subunit. This chain is Large ribosomal subunit protein bL20, found in Rhodopseudomonas palustris (strain HaA2).